Here is a 305-residue protein sequence, read N- to C-terminus: Testis-expressed protein 52 (305 aa).

The disordered stretch occupies residues 284–305 (HLSKAQASKSPARKRKRRPGHF). Positions 294 to 305 (PARKRKRRPGHF) are enriched in basic residues.

As to expression, expressed in Testis.

The polypeptide is Testis-expressed protein 52 (Homo sapiens (Human)).